The chain runs to 496 residues: UDP-N-acetylmuramoyl-L-alanyl-D-glutamate--2,6-diaminopimelate ligase (496 aa).

Positions 29 and 31 each coordinate UDP-N-acetyl-alpha-D-muramoyl-L-alanyl-D-glutamate. ATP is bound at residue 118-124 (GTNGKTT). Residues Asn-159, 160-161 (TT), Ser-187, Gln-193, and Arg-195 contribute to the UDP-N-acetyl-alpha-D-muramoyl-L-alanyl-D-glutamate site. At Lys-227 the chain carries N6-carboxylysine. Meso-2,6-diaminopimelate is bound by residues Arg-392, 416–419 (DNPR), Gly-467, and Glu-471. The Meso-diaminopimelate recognition motif motif lies at 416–419 (DNPR).

The protein belongs to the MurCDEF family. MurE subfamily. Mg(2+) is required as a cofactor. Carboxylation is probably crucial for Mg(2+) binding and, consequently, for the gamma-phosphate positioning of ATP.

The protein localises to the cytoplasm. It carries out the reaction UDP-N-acetyl-alpha-D-muramoyl-L-alanyl-D-glutamate + meso-2,6-diaminopimelate + ATP = UDP-N-acetyl-alpha-D-muramoyl-L-alanyl-gamma-D-glutamyl-meso-2,6-diaminopimelate + ADP + phosphate + H(+). It participates in cell wall biogenesis; peptidoglycan biosynthesis. Functionally, catalyzes the addition of meso-diaminopimelic acid to the nucleotide precursor UDP-N-acetylmuramoyl-L-alanyl-D-glutamate (UMAG) in the biosynthesis of bacterial cell-wall peptidoglycan. This Wigglesworthia glossinidia brevipalpis protein is UDP-N-acetylmuramoyl-L-alanyl-D-glutamate--2,6-diaminopimelate ligase.